The sequence spans 406 residues: Cysteine desulfurase (406 aa).

An N6-(pyridoxal phosphate)lysine modification is found at Lys226. The Cysteine persulfide intermediate role is filled by Cys364.

This sequence belongs to the class-V pyridoxal-phosphate-dependent aminotransferase family. Csd subfamily. In terms of assembly, homodimer. Interacts with SufE and the SufBCD complex composed of SufB, SufC and SufD. The interaction with SufE is required to mediate the direct transfer of the sulfur atom from the S-sulfanylcysteine. It depends on pyridoxal 5'-phosphate as a cofactor.

The protein resides in the cytoplasm. It catalyses the reaction (sulfur carrier)-H + L-cysteine = (sulfur carrier)-SH + L-alanine. The enzyme catalyses L-selenocysteine + AH2 = hydrogenselenide + L-alanine + A + H(+). The protein operates within cofactor biosynthesis; iron-sulfur cluster biosynthesis. Its function is as follows. Cysteine desulfurases mobilize the sulfur from L-cysteine to yield L-alanine, an essential step in sulfur metabolism for biosynthesis of a variety of sulfur-containing biomolecules. Component of the suf operon, which is activated and required under specific conditions such as oxidative stress and iron limitation. Acts as a potent selenocysteine lyase in vitro, that mobilizes selenium from L-selenocysteine. Selenocysteine lyase activity is however unsure in vivo. The protein is Cysteine desulfurase of Salmonella agona (strain SL483).